Consider the following 362-residue polypeptide: Aminomethyltransferase (362 aa).

Belongs to the GcvT family. The glycine cleavage system is composed of four proteins: P, T, L and H.

The enzyme catalyses N(6)-[(R)-S(8)-aminomethyldihydrolipoyl]-L-lysyl-[protein] + (6S)-5,6,7,8-tetrahydrofolate = N(6)-[(R)-dihydrolipoyl]-L-lysyl-[protein] + (6R)-5,10-methylene-5,6,7,8-tetrahydrofolate + NH4(+). In terms of biological role, the glycine cleavage system catalyzes the degradation of glycine. The sequence is that of Aminomethyltransferase from Porphyromonas gingivalis (strain ATCC 33277 / DSM 20709 / CIP 103683 / JCM 12257 / NCTC 11834 / 2561).